A 307-amino-acid chain; its full sequence is Pseudouridine-5'-phosphate glycosidase (307 aa).

Glu-28 serves as the catalytic Proton donor. Substrate contacts are provided by Lys-89 and Val-109. Asp-141 provides a ligand contact to Mn(2+). 143–145 provides a ligand contact to substrate; that stretch reads SAD. The active-site Nucleophile is Lys-162.

This sequence belongs to the pseudouridine-5'-phosphate glycosidase family. In terms of assembly, homotrimer. Mn(2+) is required as a cofactor.

It catalyses the reaction D-ribose 5-phosphate + uracil = psi-UMP + H2O. Catalyzes the reversible cleavage of pseudouridine 5'-phosphate (PsiMP) to ribose 5-phosphate and uracil. Functions biologically in the cleavage direction, as part of a pseudouridine degradation pathway. In Nocardioides sp. (strain ATCC BAA-499 / JS614), this protein is Pseudouridine-5'-phosphate glycosidase.